The sequence spans 575 residues: V-type ATP synthase alpha chain (575 aa).

Residue 238–245 (GPFGAGKT) coordinates ATP.

It belongs to the ATPase alpha/beta chains family.

It catalyses the reaction ATP + H2O + 4 H(+)(in) = ADP + phosphate + 5 H(+)(out). Its function is as follows. Produces ATP from ADP in the presence of a proton gradient across the membrane. The V-type alpha chain is a catalytic subunit. The polypeptide is V-type ATP synthase alpha chain (Borrelia garinii subsp. bavariensis (strain ATCC BAA-2496 / DSM 23469 / PBi) (Borreliella bavariensis)).